The sequence spans 298 residues: Possible hemolysin C (298 aa).

CBS domains lie at 80 to 141 (MVPR…QNGC) and 145 to 202 (LIRK…IDDE).

This sequence belongs to the UPF0053 family. Hemolysin C subfamily.

This chain is Possible hemolysin C (tlyC), found in Rickettsia canadensis (strain McKiel).